Consider the following 326-residue polypeptide: Adenosine receptor A1 (326 aa).

The Extracellular portion of the chain corresponds to 1–10; it reads MPPYISAFQA. A helical transmembrane segment spans residues 11 to 33; that stretch reads AYIGIEVLIALVSVPGNVLVIWA. At 34 to 46 the chain is on the cytoplasmic side; the sequence is VKVNQALRDATFC. The helical transmembrane segment at 47-69 threads the bilayer; that stretch reads FIVSLAVADVAVGALVIPLAILI. Topologically, residues 70-80 are extracellular; sequence NIGPQTYFHTC. Cys-80 and Cys-169 are oxidised to a cystine. A helical transmembrane segment spans residues 81–102; the sequence is LMVACPVLILTQSSILALLAIA. At 103–123 the chain is on the cytoplasmic side; that stretch reads VDRYLRVKIPLRYKTVVTQRR. Residues 124–146 traverse the membrane as a helical segment; it reads AAVAIAGCWILSLVVGLTPMFGW. The Extracellular segment spans residues 147–176; sequence NNLSVVEQDWRANGSVGEPVIKCEFEKVIS. Asn-148 and Asn-159 each carry an N-linked (GlcNAc...) asparagine glycan. A helical transmembrane segment spans residues 177–201; it reads MEYMVYFNFFVWVLPPLLLMVLIYL. Topologically, residues 202 to 235 are cytoplasmic; the sequence is EVFYLIRKQLNKKVSASSGDPQKYYGKELKIAKS. The helical transmembrane segment at 236–259 threads the bilayer; that stretch reads LALILFLFALSWLPLHILNCITLF. Topologically, residues 260-267 are extracellular; that stretch reads CPTCQKPS. The chain crosses the membrane as a helical span at residues 268 to 292; that stretch reads ILIYIAIFLTHGNSAMNPIVYAFRI. At 293 to 326 the chain is on the cytoplasmic side; sequence HKFRVTFLKIWNDHFRCQPKPPIDEDLPEEKAED. Residue Cys-309 is the site of S-palmitoyl cysteine attachment.

This sequence belongs to the G-protein coupled receptor 1 family. Widely expressed in brain and spinal cord.

The protein resides in the cell membrane. Functionally, receptor for adenosine. The activity of this receptor is mediated by G proteins which inhibit adenylyl cyclase. The chain is Adenosine receptor A1 (Adora1) from Rattus norvegicus (Rat).